The primary structure comprises 259 residues: NAD kinase (259 aa).

Asp-43 serves as the catalytic Proton acceptor. NAD(+) is bound by residues 43-44, 111-112, and Arg-136; these read DG and NE.

It belongs to the NAD kinase family. A divalent metal cation is required as a cofactor.

It localises to the cytoplasm. The enzyme catalyses NAD(+) + ATP = ADP + NADP(+) + H(+). In terms of biological role, involved in the regulation of the intracellular balance of NAD and NADP, and is a key enzyme in the biosynthesis of NADP. Catalyzes specifically the phosphorylation on 2'-hydroxyl of the adenosine moiety of NAD to yield NADP. In Mycoplasma genitalium (strain ATCC 33530 / DSM 19775 / NCTC 10195 / G37) (Mycoplasmoides genitalium), this protein is NAD kinase.